The chain runs to 90 residues: Small ribosomal subunit protein bS20 (90 aa).

Basic residues predominate over residues 1-11 (MAHHKSAKKRI). The tract at residues 1–22 (MAHHKSAKKRIRQTERRTEVNR) is disordered. The span at 12–22 (RQTERRTEVNR) shows a compositional bias: basic and acidic residues.

This sequence belongs to the bacterial ribosomal protein bS20 family.

In terms of biological role, binds directly to 16S ribosomal RNA. The protein is Small ribosomal subunit protein bS20 of Paramagnetospirillum magneticum (strain ATCC 700264 / AMB-1) (Magnetospirillum magneticum).